The sequence spans 25 residues: Omega-conotoxin CVIB (25 aa).

3 disulfides stabilise this stretch: Cys-1–Cys-16, Cys-8–Cys-20, and Cys-15–Cys-25. Residue Cys-25 is modified to Cysteine amide.

It belongs to the conotoxin O1 superfamily. In terms of tissue distribution, expressed by the venom duct.

It localises to the secreted. Its function is as follows. Omega-conotoxins act at presynaptic membranes, they bind and block voltage-gated calcium channels (Cav). This toxin blocks N-, P- and Q-type calcium channels. It shows high activities on Cav2.1/CACNA1A (IC(50)=11 nM) and Cav2.2/CACNA1B (IC(50)=7.7 nM). In addition, it shows a higher potency when Cav2.2/CACNA1B is only expressed with the ancillary subunit CACNB3 (IC(50)=1.6 nM) than on Cav2.2/CACNA1B expressed with the ancillary subunits CACNA2D1 and CACNB3 (IC(50)=12 nM). Both the Cav2.2/CACNA1B block by this toxin and the recovery are voltage-independent. It is noteworthy that ancillary subunits beta do not modulate recovery from this toxin block, since Cav2.2/CACNA1B expressed with either the ancillary subunit CACNB2a (isoform 2a) or with CACNB3 exhibits moderate recovery. This is Omega-conotoxin CVIB from Conus catus (Cat cone).